A 289-amino-acid chain; its full sequence is 3-hydroxy-16-methoxy-2,3-dihydrotabersonine N-methyltransferase (289 aa).

The interval 71-80 is SAM motif I; the sequence is MLDVGSGLGG. The tract at residues 134-142 is SAM motif II; it reads GKFDVVFTI. The segment at 161-170 is SAM motif III; it reads VAAPGAAIII. The short motif at 287 to 289 is the Microbody targeting signal element; sequence KSI.

The protein belongs to the class I-like SAM-binding methyltransferase superfamily. gTMT family. Homodimer. Mainly expressed in young leaves, and, to a lower extent, in mature leaves, flowers, stems and roots (at protein level).

Its subcellular location is the thylakoid. The protein resides in the peroxisome. It catalyses the reaction (3R)-3-hydroxy-16-methoxy-2,3-dihydrotabersonine + S-adenosyl-L-methionine = deacetoxyvindoline + S-adenosyl-L-homocysteine + H(+). Its pathway is alkaloid biosynthesis; vindoline biosynthesis. With respect to regulation, inhibited by gamma-tocopherol. S-adenosyl-L-methionine-dependent N-methyltransferase that catalyzes a nitrogen methylation involved in vindoline biosynthesis. Displays a strict requirement for a 2,3-dihydro bond in the aspidosperma skeleton. Can use 2,3-dihydrotabersonine, 2,3-dihydro-3-hydroxytabersonine and 2,3,6,7-tetraydro-3-hydroxytabersonine as substrates, but not tabersonine, vincadifformine, 21-hydroxycyclolochnericine, tryptamine, norharmane, harmaline, catharanthine, norajmaline, ajmaline, serpentine, ajmalicine, yohimbine or gamma-tocopherol. Inactive with picrinine as substrate. The chain is 3-hydroxy-16-methoxy-2,3-dihydrotabersonine N-methyltransferase from Catharanthus roseus (Madagascar periwinkle).